Consider the following 670-residue polypeptide: DNA ligase (670 aa).

NAD(+) is bound by residues 33–37, 82–83, and E113; these read DAEFD and SL. The active-site N6-AMP-lysine intermediate is the K115. Residues R136, E170, K285, and K309 each contribute to the NAD(+) site. Zn(2+) contacts are provided by C403, C406, C421, and C427. Residues 587–670 form the BRCT domain; that stretch reads EQNLYLSGKT…EVLKAGDNNG (84 aa).

The protein belongs to the NAD-dependent DNA ligase family. LigA subfamily. The cofactor is Mg(2+). Mn(2+) is required as a cofactor.

The enzyme catalyses NAD(+) + (deoxyribonucleotide)n-3'-hydroxyl + 5'-phospho-(deoxyribonucleotide)m = (deoxyribonucleotide)n+m + AMP + beta-nicotinamide D-nucleotide.. Functionally, DNA ligase that catalyzes the formation of phosphodiester linkages between 5'-phosphoryl and 3'-hydroxyl groups in double-stranded DNA using NAD as a coenzyme and as the energy source for the reaction. It is essential for DNA replication and repair of damaged DNA. The polypeptide is DNA ligase (Halothermothrix orenii (strain H 168 / OCM 544 / DSM 9562)).